Consider the following 539-residue polypeptide: Eukaryotic translation initiation factor 3 subunit L (539 aa).

The PCI domain occupies 306–514 (TFSDILLYVQ…IHIADTKVSH (209 aa)).

It belongs to the eIF-3 subunit L family. Component of the eukaryotic translation initiation factor 3 (eIF-3) complex. The eIF-3 complex interacts with pix.

It localises to the cytoplasm. Component of the eukaryotic translation initiation factor 3 (eIF-3) complex, which is involved in protein synthesis of a specialized repertoire of mRNAs and, together with other initiation factors, stimulates binding of mRNA and methionyl-tRNAi to the 40S ribosome. The eIF-3 complex specifically targets and initiates translation of a subset of mRNAs involved in cell proliferation. The protein is Eukaryotic translation initiation factor 3 subunit L of Drosophila willistoni (Fruit fly).